The sequence spans 113 residues: Large ribosomal subunit protein bL20c (113 aa).

Belongs to the bacterial ribosomal protein bL20 family.

It localises to the plastid. The protein localises to the chloroplast. Its function is as follows. Binds directly to 23S ribosomal RNA and is necessary for the in vitro assembly process of the 50S ribosomal subunit. It is not involved in the protein synthesizing functions of that subunit. This is Large ribosomal subunit protein bL20c from Nephroselmis olivacea (Green alga).